Reading from the N-terminus, the 338-residue chain is DNA-directed RNA polymerase subunit alpha (338 aa).

The tract at residues 1–230 (MRKITTSAYM…QQMSVFKGIL (230 aa)) is alpha N-terminal domain (alpha-NTD). Positions 247-338 (FSKLLSSVED…ELKSQMSAKE (92 aa)) are alpha C-terminal domain (alpha-CTD).

It belongs to the RNA polymerase alpha chain family. Homodimer. The RNAP catalytic core consists of 2 alpha, 1 beta, 1 beta' and 1 omega subunit. When a sigma factor is associated with the core the holoenzyme is formed, which can initiate transcription.

It carries out the reaction RNA(n) + a ribonucleoside 5'-triphosphate = RNA(n+1) + diphosphate. Its function is as follows. DNA-dependent RNA polymerase catalyzes the transcription of DNA into RNA using the four ribonucleoside triphosphates as substrates. This is DNA-directed RNA polymerase subunit alpha from Campylobacter concisus (strain 13826).